A 324-amino-acid polypeptide reads, in one-letter code: Methionyl-tRNA formyltransferase (324 aa).

(6S)-5,6,7,8-tetrahydrofolate is bound at residue 109–112; that stretch reads SLLP. A disordered region spans residues 305-324; it reads LHPGESFHKATQDNQGASET.

Belongs to the Fmt family.

The catalysed reaction is L-methionyl-tRNA(fMet) + (6R)-10-formyltetrahydrofolate = N-formyl-L-methionyl-tRNA(fMet) + (6S)-5,6,7,8-tetrahydrofolate + H(+). Functionally, attaches a formyl group to the free amino group of methionyl-tRNA(fMet). The formyl group appears to play a dual role in the initiator identity of N-formylmethionyl-tRNA by promoting its recognition by IF2 and preventing the misappropriation of this tRNA by the elongation apparatus. The chain is Methionyl-tRNA formyltransferase from Nitrosomonas europaea (strain ATCC 19718 / CIP 103999 / KCTC 2705 / NBRC 14298).